Here is a 401-residue protein sequence, read N- to C-terminus: Lsg locus putative protein 1 (401 aa).

Helical transmembrane passes span 8 to 28 (VIYL…LPYL), 36 to 56 (GYGS…VVSL), 87 to 107 (IIGS…LFYA), 132 to 152 (SYAF…VALL), 162 to 182 (KRIL…YFLY), 199 to 219 (ALFY…SFFL), 237 to 257 (LGLY…IQAL), 282 to 302 (WALF…IIPE), 320 to 340 (FILF…VNYL), 352 to 372 (CSVL…FTEI), and 374 to 394 (YIPY…YFMT).

This sequence belongs to the polysaccharide synthase family. HI_0867/HI_1700 subfamily.

The protein resides in the cell membrane. This is Lsg locus putative protein 1 from Haemophilus influenzae (strain ATCC 51907 / DSM 11121 / KW20 / Rd).